The chain runs to 544 residues: Chaperonin GroEL (544 aa).

Residues 30–33, lysine 51, 87–91, glycine 415, and aspartate 495 each bind ATP; these read TLGP and DGTTT.

Belongs to the chaperonin (HSP60) family. In terms of assembly, forms a cylinder of 14 subunits composed of two heptameric rings stacked back-to-back. Interacts with the co-chaperonin GroES.

The protein localises to the cytoplasm. The enzyme catalyses ATP + H2O + a folded polypeptide = ADP + phosphate + an unfolded polypeptide.. Together with its co-chaperonin GroES, plays an essential role in assisting protein folding. The GroEL-GroES system forms a nano-cage that allows encapsulation of the non-native substrate proteins and provides a physical environment optimized to promote and accelerate protein folding. This Aeromonas salmonicida (strain A449) protein is Chaperonin GroEL.